The following is a 241-amino-acid chain: Uridylate kinase (241 aa).

14–17 (KLSG) provides a ligand contact to ATP. The interval 22–27 (GGLGMG) is involved in allosteric activation by GTP. G56 serves as a coordination point for UMP. ATP-binding residues include G57 and R61. UMP-binding positions include D77 and 138–145 (TGNPFFTT). ATP contacts are provided by T165, Y171, and D174.

Belongs to the UMP kinase family. Homohexamer.

Its subcellular location is the cytoplasm. It catalyses the reaction UMP + ATP = UDP + ADP. Its pathway is pyrimidine metabolism; CTP biosynthesis via de novo pathway; UDP from UMP (UMPK route): step 1/1. With respect to regulation, allosterically activated by GTP. Inhibited by UTP. Its function is as follows. Catalyzes the reversible phosphorylation of UMP to UDP. This is Uridylate kinase from Psychrobacter sp. (strain PRwf-1).